The following is a 1057-amino-acid chain: MPKREDINKILVLGSGPIIIGQAAEFDYSGTQACLSLKELGYQTVLINSNPATIMTDTDIADKVYIEPLTLQFVSQILRKELPDAILPTLGGQQGLNMAMELSEAGILDELGIELLGTKLDAIDQAEDRERFRALMNDLNEPVPDSGIATTVEEAVSFADQSGYPVIVRPAFTMGGTGGGIAQDEAELRKITANGLTLSPVTQVLIEQSIAGLKEIEFEVMRDSVDNAIVVCNMENFDPVGIHTGDSIVYAPVQTLTDREVQMLRDASLSIIRALKIEGGCNVQLALDPAQDRYYVIEVNPRVSRSSALASKATGYPIAKVAAKIAVGLTLDEILNPVTGTTLAEFEPALDYVVCKIPRWPFDKFVRADRRLGTQMKATGEVMAVGRNVEEATQKAIRSLDIDINYIGDEELADLNEADLVDGIIHARDDRIFYLYEAIKRGYSVDKLADLTKINVYYLDKLLHIYEIEQELIATPFNADVLELAKKNGFSDEVIGKMWKTNEKEVRAYREQMGLSPVYKMIDTCAGEFESQTPYYYSTYELENESIVSNRKSIVVLGSGPIRIGQGVEFDYATVHSIQAIRQMGYEAIVVNNNPETVSTDFSMSDKLYFEPLTVEDVMNVIDLEKPEGVIVQFGGQTAINLAEPLAERGIKIFGTTVENVNRAEDRDEFNKLIQANGIRQPQGRTATTTSGAIEAAESIGYPVLVRPSYVLGGRAMEIVHAKEELENYMKNAVKVSHNHPVLVDQYLVGKECEVDVISDGENVVIPGIMEHIERSGVHSGDSMTVYPAQTLSQKVQDEIVKVSIKLAQSLECIGLMNIQFVVHNDEAYVIEVNPRASRTVPIMSKVTDLPMARLATRAILGESLVNQGLKPGLHPAGEIIHVKAPVFSFTKLDNVDSLLGPEMKSTGEVMGSDRTMAKALYKAFEGAKMHMPDHGKVLITVKDEDKGEAIDFARRFWELGYQLVATKGTAQTLAAHGLKVETVGKMTEENNIVDRIHDHRIQMVINTISDSTTSAADGIKIRSTALTYGVPLFTALDTVDAILQVLESQAFTTLHL.

The interval 1-401 is carboxyphosphate synthetic domain; that stretch reads MPKREDINKI…ATQKAIRSLD (401 aa). Positions 129, 169, 175, 176, 208, 210, 215, 241, 242, 243, 284, and 298 each coordinate ATP. In terms of domain architecture, ATP-grasp 1 spans 133–327; that stretch reads RALMNDLNEP…IAKVAAKIAV (195 aa). Gln284, Glu298, and Asn300 together coordinate Mg(2+). Residues Gln284, Glu298, and Asn300 each contribute to the Mn(2+) site. Residues 402–546 are oligomerization domain; sequence IDINYIGDEE…YSTYELENES (145 aa). Residues 547 to 929 are carbamoyl phosphate synthetic domain; it reads IVSNRKSIVV…ALYKAFEGAK (383 aa). The 191-residue stretch at 671–861 folds into the ATP-grasp 2 domain; the sequence is NKLIQANGIR…MARLATRAIL (191 aa). Residues Arg707, Gln746, Leu748, Glu752, Gly777, Val778, His779, Ser780, Gln820, and Glu832 each contribute to the ATP site. Mg(2+) contacts are provided by Gln820, Glu832, and Asn834. Mn(2+)-binding residues include Gln820, Glu832, and Asn834. The 128-residue stretch at 930–1057 folds into the MGS-like domain; that stretch reads MHMPDHGKVL…ESQAFTTLHL (128 aa). The interval 930–1057 is allosteric domain; sequence MHMPDHGKVL…ESQAFTTLHL (128 aa).

The protein belongs to the CarB family. As to quaternary structure, composed of two chains; the small (or glutamine) chain promotes the hydrolysis of glutamine to ammonia, which is used by the large (or ammonia) chain to synthesize carbamoyl phosphate. Tetramer of heterodimers (alpha,beta)4. Requires Mg(2+) as cofactor. It depends on Mn(2+) as a cofactor.

It catalyses the reaction hydrogencarbonate + L-glutamine + 2 ATP + H2O = carbamoyl phosphate + L-glutamate + 2 ADP + phosphate + 2 H(+). The catalysed reaction is hydrogencarbonate + NH4(+) + 2 ATP = carbamoyl phosphate + 2 ADP + phosphate + 2 H(+). The protein operates within amino-acid biosynthesis; L-arginine biosynthesis; carbamoyl phosphate from bicarbonate: step 1/1. Its pathway is pyrimidine metabolism; UMP biosynthesis via de novo pathway; (S)-dihydroorotate from bicarbonate: step 1/3. In terms of biological role, large subunit of the glutamine-dependent carbamoyl phosphate synthetase (CPSase). CPSase catalyzes the formation of carbamoyl phosphate from the ammonia moiety of glutamine, carbonate, and phosphate donated by ATP, constituting the first step of 2 biosynthetic pathways, one leading to arginine and/or urea and the other to pyrimidine nucleotides. The large subunit (synthetase) binds the substrates ammonia (free or transferred from glutamine from the small subunit), hydrogencarbonate and ATP and carries out an ATP-coupled ligase reaction, activating hydrogencarbonate by forming carboxy phosphate which reacts with ammonia to form carbamoyl phosphate. This chain is Carbamoyl phosphate synthase large chain, found in Pediococcus pentosaceus (strain ATCC 25745 / CCUG 21536 / LMG 10740 / 183-1w).